Consider the following 260-residue polypeptide: Carbonic anhydrase 2 (260 aa).

An N-acetylserine modification is found at Ser-2. Ser-2 is modified (phosphoserine). The Alpha-carbonic anhydrase domain occupies His-3 to Phe-259. His-64 serves as the catalytic Proton donor/acceptor. Positions 94, 96, and 119 each coordinate Zn(2+). Phosphoserine is present on residues Ser-165 and Ser-172. Position 198–199 (Thr-198–Thr-199) interacts with substrate.

This sequence belongs to the alpha-carbonic anhydrase family. As to quaternary structure, interacts with SLC4A4. Interaction with SLC4A7 regulates SLC4A7 transporter activity. Interacts with SLC26A6 isoform 4 (via C-terminus cytoplasmic domain). It depends on Zn(2+) as a cofactor. Co(2+) is required as a cofactor.

The protein resides in the cytoplasm. It is found in the cell membrane. It carries out the reaction hydrogencarbonate + H(+) = CO2 + H2O. It catalyses the reaction urea = cyanamide + H2O. With respect to regulation, activated by X-ray, histamine, L-adrenaline, L- and D-phenylalanine, L- and D-histidine, L-His-OMe and beta-Ala-His (carnosine). Competitively inhibited by saccharin, thioxolone, coumarins, 667-coumate, celecoxib (Celebrex), valdecoxib (Bextra), SC-125, SC-560, diclofenac, acetate, azide, bromide, sulfonamide derivatives such as acetazolamide (AZA), methazolamide (MZA), ethoxzolamide (EZA), dichlorophenamide (DCP), brinzolamide, dansylamide, thiabendazole-5-sulfonamide, trifluoromethane sulfonamide and N-hydroxysulfamide, fructose-based sugar sulfamate RWJ-37497, and Foscarnet (phosphonoformate trisodium salt). Repressed strongly by hydrogen sulfide(HS) and weakly by nitrate (NO(3)). Esterase activity weakly reduced by cyanamide. N-hydroxyurea interferes with zinc binding and inhibit activity. In terms of biological role, catalyzes the reversible hydration of carbon dioxide. Can also hydrate cyanamide to urea. Stimulates the chloride-bicarbonate exchange activity of SLC26A6. Essential for bone resorption and osteoclast differentiation. Involved in the regulation of fluid secretion into the anterior chamber of the eye. Contributes to intracellular pH regulation in the duodenal upper villous epithelium during proton-coupled peptide absorption. This chain is Carbonic anhydrase 2 (CA2), found in Homo sapiens (Human).